A 98-amino-acid chain; its full sequence is NADH-ubiquinone oxidoreductase chain 4L (98 aa).

3 helical membrane passes run 1-21, 29-49, and 61-81; these read MTPT…GMLI, SLLC…LIAL, and IILL…LVSI.

The protein belongs to the complex I subunit 4L family. In terms of assembly, core subunit of respiratory chain NADH dehydrogenase (Complex I) which is composed of 45 different subunits.

Its subcellular location is the mitochondrion inner membrane. The catalysed reaction is a ubiquinone + NADH + 5 H(+)(in) = a ubiquinol + NAD(+) + 4 H(+)(out). Core subunit of the mitochondrial membrane respiratory chain NADH dehydrogenase (Complex I) which catalyzes electron transfer from NADH through the respiratory chain, using ubiquinone as an electron acceptor. Part of the enzyme membrane arm which is embedded in the lipid bilayer and involved in proton translocation. This chain is NADH-ubiquinone oxidoreductase chain 4L (MT-ND4L), found in Macaca maura (Moor macaque).